The following is a 527-amino-acid chain: Organic cation/carnitine transporter 2 (527 aa).

At 1-27 (MAEPTQPLLTDSNSSSPRSLDDTIESY) the chain is on the cytoplasmic side. A helical transmembrane segment spans residues 28–48 (IGSFGWAQFLQAALVSFSGVF). At 49–119 (DAQQTFISVF…SFVKGLPESS (71 aa)) the chain is on the extracellular side. The helical transmembrane segment at 120–140 (FFVGCLIGGLVLSTLADSSLG) threads the bilayer. The Cytoplasmic segment spans residues 141–149 (RKNMLFLSC). A helical transmembrane segment spans residues 150–170 (LVMAISTMLTVFSPNIWVYAV). The Extracellular segment spans residues 171–176 (LRFVNG). The chain crosses the membrane as a helical span at residues 177–195 (FGRATIGTCALVLSTELVG). 190 to 197 (STELVGKK) is an ATP binding site. Topologically, residues 196–201 (KKWRGR) are cytoplasmic. The chain crosses the membrane as a helical span at residues 202–222 (VGIMSFFGFMLGFLSLPLMAY). At 223-230 (MNRGSSWR) the chain is on the extracellular side. A helical membrane pass occupies residues 231–251 (ILYAWTSIPTIIYCVLVRFFV). Residues 252-326 (CESPRWLFVR…LVEKRWALKR (75 aa)) lie on the Cytoplasmic side of the membrane. Residues 327-347 (LSAVMAIAFGIGLVYYGMPLA) traverse the membrane as a helical segment. Residues 348 to 356 (LSNLDFNIY) are Extracellular-facing. A helical transmembrane segment spans residues 357–377 (LSAAFNALMDLPANLITLFLV). The Cytoplasmic segment spans residues 378–385 (DKLSRRNA). The helical transmembrane segment at 386-406 (LIGFTALGGVSSVLIFALHNM) threads the bilayer. Over 407–415 (RIGNHGALQ) the chain is Extracellular. A helical transmembrane segment spans residues 416–436 (LALELISYFSACSAFNMEMIY). The Cytoplasmic portion of the chain corresponds to 437-448 (TIELFPTCVRNS). A helical membrane pass occupies residues 449–469 (AIAMARQALVLGGVFSPIMVA). At 470 to 475 (AGRKNA) the chain is on the extracellular side. The chain crosses the membrane as a helical span at residues 476–496 (FWSFGLFGLAIGLLGLFAVGL). Over 497 to 527 (PETRGSDLCDTMDEEECKDRRSKVAVNNVIA) the chain is Cytoplasmic.

This sequence belongs to the major facilitator (TC 2.A.1) superfamily. Organic cation transporter (TC 2.A.1.19) family. In terms of tissue distribution, weakly expressed in roots, including tips and initiation site of lateral roots, siliques and flowers, especially in pollen and stigma.

It is found in the vacuole membrane. Its function is as follows. High affinity carnitine transporter involved in the active cellular uptake of carnitine. Also transports organic cations. This chain is Organic cation/carnitine transporter 2 (OCT2), found in Arabidopsis thaliana (Mouse-ear cress).